The chain runs to 349 residues: Meiotic recombination protein DMC1 homolog (349 aa).

138 to 145 (GEFRSGKT) is a binding site for ATP. Residue arginine 240 participates in dsDNA binding. SsDNA-binding residues include arginine 240, phenylalanine 243, arginine 246, arginine 252, and arginine 320. The dsDNA site is built by arginine 246 and arginine 252.

Belongs to the RecA family. DMC1 subfamily. As to quaternary structure, double stacked ring-shaped homooctamer.

The protein resides in the nucleus. May participate in meiotic recombination. This is Meiotic recombination protein DMC1 homolog (LIM15) from Lilium longiflorum (Trumpet lily).